Consider the following 217-residue polypeptide: 25 kDa ookinete surface antigen (217 aa).

The signal sequence occupies residues Met1–Ser16. The 30-residue stretch at Cys30–Glu59 folds into the EGF-like 1; truncated domain. EGF-like domains follow at residues Lys61–Ile106, Ile106–Ser150, and Gly153–Thr193. 9 cysteine pairs are disulfide-bonded: Cys65-Cys80, Cys74-Cys92, Cys94-Cys105, Cys110-Cys120, Cys115-Cys133, Cys135-Cys149, Cys157-Cys168, Cys161-Cys177, and Cys179-Cys192. Asn112 carries N-linked (GlcNAc...) asparagine glycosylation. 2 N-linked (GlcNAc...) asparagine glycosylation sites follow: Asn165 and Asn187. The GPI-anchor amidated serine moiety is linked to residue Ser196. The propeptide at Ala197–Met217 is removed in mature form. A glycan (N-linked (GlcNAc...) asparagine) is linked at Asn202.

It is found in the cell membrane. The sequence is that of 25 kDa ookinete surface antigen from Plasmodium falciparum (isolate NF54).